The primary structure comprises 238 residues: Probable 2-phosphosulfolactate phosphatase (238 aa).

This sequence belongs to the ComB family. It depends on Mg(2+) as a cofactor.

It catalyses the reaction (2R)-O-phospho-3-sulfolactate + H2O = (2R)-3-sulfolactate + phosphate. In Clostridium botulinum (strain Alaska E43 / Type E3), this protein is Probable 2-phosphosulfolactate phosphatase.